The chain runs to 406 residues: Arginine deiminase (406 aa).

Cys396 (amidino-cysteine intermediate) is an active-site residue.

Belongs to the arginine deiminase family.

It is found in the cytoplasm. It carries out the reaction L-arginine + H2O = L-citrulline + NH4(+). It functions in the pathway amino-acid degradation; L-arginine degradation via ADI pathway; carbamoyl phosphate from L-arginine: step 1/2. The polypeptide is Arginine deiminase (Vibrio vulnificus (strain YJ016)).